A 145-amino-acid chain; its full sequence is uncharacterized protein (145 aa).

The ACT domain occupies 78-145 (KLQIVAKDRI…DVVEKISILW (68 aa)).

This is an uncharacterized protein from Methanocaldococcus jannaschii (strain ATCC 43067 / DSM 2661 / JAL-1 / JCM 10045 / NBRC 100440) (Methanococcus jannaschii).